The sequence spans 233 residues: Phosphoribosylaminoimidazole-succinocarboxamide synthase (233 aa).

Belongs to the SAICAR synthetase family.

The enzyme catalyses 5-amino-1-(5-phospho-D-ribosyl)imidazole-4-carboxylate + L-aspartate + ATP = (2S)-2-[5-amino-1-(5-phospho-beta-D-ribosyl)imidazole-4-carboxamido]succinate + ADP + phosphate + 2 H(+). The protein operates within purine metabolism; IMP biosynthesis via de novo pathway; 5-amino-1-(5-phospho-D-ribosyl)imidazole-4-carboxamide from 5-amino-1-(5-phospho-D-ribosyl)imidazole-4-carboxylate: step 1/2. The polypeptide is Phosphoribosylaminoimidazole-succinocarboxamide synthase (Staphylococcus saprophyticus subsp. saprophyticus (strain ATCC 15305 / DSM 20229 / NCIMB 8711 / NCTC 7292 / S-41)).